The sequence spans 1370 residues: Putative Polycomb group protein ASXL2 (1370 aa).

The HTH HARE-type domain maps to 11–86 (RTWAEAAKTV…RMGVYTLKKD (76 aa)). Positions 92 to 216 (KELSECSEES…DSVPAKPGQM (125 aa)) are disordered. Residues 103–120 (DGQSDSHSSDNSSSSDGG) show a composition bias toward low complexity. Residues 141-152 (PPSPPSGCPSPT) show a composition bias toward pro residues. S150 is subject to Phosphoserine. The Nuclear localization signal motif lies at 178 to 182 (QQKKK). A compositionally biased stretch (polar residues) spans 186-198 (CRPSMSISNQHLS). The 110-residue stretch at 229-338 (PDSILVNTNL…FENYYGQSSG (110 aa)) folds into the DEUBAD domain. The short motif at 258-262 (LLLLL) is the LXXLL motif element. Disordered stretches follow at residues 340–487 (SLED…AGLQ) and 516–535 (QESL…SSWE). Positions 398 to 412 (QKEENQDEARPDSKS) are enriched in basic and acidic residues. Phosphoserine occurs at positions 477, 524, 553, and 590. An Asymmetric dimethylarginine modification is found at R594. S601 bears the Phosphoserine mark. The segment covering 643 to 652 (IPGPGPGGGQ) has biased composition (gly residues). 3 disordered regions span residues 643-734 (IPGP…LASS), 805-891 (PKAG…SSIP), and 1103-1175 (GHAD…VSEQ). Composition is skewed to polar residues over residues 719-734 (AQLQ…LASS) and 830-839 (MTSSPVTTAS). Positions 849–870 (SGTATSTGSAPSSSTLPAASSL) are enriched in low complexity. Residues 871–891 (KTPGTSANMNGPISRTSSSIP) are compositionally biased toward polar residues. Residues 1119 to 1131 (DESDEDRVGDEQE) show a composition bias toward acidic residues. Phosphoserine is present on residues S1121 and S1254. Residues 1332 to 1369 (PSKCYCRLKAMIMCKGCGAFCHDDCIGPSKLCVSCLVV) form a PHD-type; atypical zinc finger.

It belongs to the Asx family. As to quaternary structure, core component of the polycomb repressive deubiquitinase (PR-DUB) complex, at least composed of BAP1, one of ASXL1, ASXL2 or (probably) ASXL3, and one of MBD5 or MBD6. Distinct combinations of ASXL and MBD proteins may preferentially bind specific histone modification marks. The PR-DUB core associates with a number of accessory proteins, including FOXK1, FOXK2, KDM1B, HCFC1 and OGT; KDM1B specifically associates with ASXL2 PR-DUB complexes. Interacts (via PHD domain) with MBD5 and MBD6 (via MBD domain); the interaction is probably direct and mediates association of MBD proteins with the PR-DUB core. Interacts with PPARA and PPARG.

Its subcellular location is the nucleus. Putative Polycomb group (PcG) protein. PcG proteins act by forming multiprotein complexes, which are required to maintain the transcriptionally repressive state of homeotic genes throughout development. PcG proteins are not required to initiate repression, but to maintain it during later stages of development. They probably act via methylation of histones, rendering chromatin heritably changed in its expressibility. Involved in transcriptional regulation mediated by ligand-bound nuclear hormone receptors, such as peroxisome proliferator-activated receptor gamma (PPARG). Acts as a coactivator for PPARG and enhances its adipocyte differentiation-inducing activity; the function seems to involve differential recruitment of acetylated and methylated histone H3. Non-catalytic component of the PR-DUB complex, a complex that specifically mediates deubiquitination of histone H2A monoubiquitinated at 'Lys-119' (H2AK119ub1). The PR-DUB complex is an epigenetic regulator of gene expression and acts as a transcriptional coactivator, affecting genes involved in development, cell communication, signaling, cell proliferation and cell viability. ASXL1, ASXL2 and ASXL3 function redundantly in the PR-DUB complex. The ASXL proteins are essential for chromatin recruitment and transcriptional activation of associated genes. ASXL1 and ASXL2 are important for BAP1 protein stability. The polypeptide is Putative Polycomb group protein ASXL2 (Asxl2) (Mus musculus (Mouse)).